The following is a 225-amino-acid chain: Cytidylate kinase (225 aa).

ATP is bound at residue 11–19 (GPAAAGKST).

Belongs to the cytidylate kinase family. Type 1 subfamily.

The protein resides in the cytoplasm. The catalysed reaction is CMP + ATP = CDP + ADP. The enzyme catalyses dCMP + ATP = dCDP + ADP. This is Cytidylate kinase from Bacillus cytotoxicus (strain DSM 22905 / CIP 110041 / 391-98 / NVH 391-98).